The following is a 73-amino-acid chain: UPF0235 protein LBL_1291 (73 aa).

This sequence belongs to the UPF0235 family.

This Leptospira borgpetersenii serovar Hardjo-bovis (strain L550) protein is UPF0235 protein LBL_1291.